A 127-amino-acid chain; its full sequence is Glycine cleavage system H protein (127 aa).

The region spanning lysine 23–glutamate 105 is the Lipoyl-binding domain. N6-lipoyllysine is present on lysine 64.

This sequence belongs to the GcvH family. The glycine cleavage system is composed of four proteins: P, T, L and H. (R)-lipoate is required as a cofactor.

In terms of biological role, the glycine cleavage system catalyzes the degradation of glycine. The H protein shuttles the methylamine group of glycine from the P protein to the T protein. The polypeptide is Glycine cleavage system H protein (Coprothermobacter proteolyticus (strain ATCC 35245 / DSM 5265 / OCM 4 / BT)).